The following is a 550-amino-acid chain: Dihydroxy-acid dehydratase (550 aa).

Aspartate 78 provides a ligand contact to Mg(2+). A [2Fe-2S] cluster-binding site is contributed by cysteine 119. 2 residues coordinate Mg(2+): aspartate 120 and lysine 121. Lysine 121 bears the N6-carboxylysine mark. Cysteine 191 provides a ligand contact to [2Fe-2S] cluster. A Mg(2+)-binding site is contributed by glutamate 440. Residue serine 466 is the Proton acceptor of the active site.

This sequence belongs to the IlvD/Edd family. In terms of assembly, homodimer. The cofactor is [2Fe-2S] cluster. Mg(2+) is required as a cofactor.

The catalysed reaction is (2R)-2,3-dihydroxy-3-methylbutanoate = 3-methyl-2-oxobutanoate + H2O. It carries out the reaction (2R,3R)-2,3-dihydroxy-3-methylpentanoate = (S)-3-methyl-2-oxopentanoate + H2O. The protein operates within amino-acid biosynthesis; L-isoleucine biosynthesis; L-isoleucine from 2-oxobutanoate: step 3/4. It functions in the pathway amino-acid biosynthesis; L-valine biosynthesis; L-valine from pyruvate: step 3/4. In terms of biological role, functions in the biosynthesis of branched-chain amino acids. Catalyzes the dehydration of (2R,3R)-2,3-dihydroxy-3-methylpentanoate (2,3-dihydroxy-3-methylvalerate) into 2-oxo-3-methylpentanoate (2-oxo-3-methylvalerate) and of (2R)-2,3-dihydroxy-3-methylbutanoate (2,3-dihydroxyisovalerate) into 2-oxo-3-methylbutanoate (2-oxoisovalerate), the penultimate precursor to L-isoleucine and L-valine, respectively. The polypeptide is Dihydroxy-acid dehydratase (Methanococcus aeolicus (strain ATCC BAA-1280 / DSM 17508 / OCM 812 / Nankai-3)).